The following is a 519-amino-acid chain: Dolichol kinase (519 aa).

Topologically, residues 1-47 are cytoplasmic; sequence MVAIIPHASFTTIKLTQKTEGSQMPTEEICKINMRTRKFDVGGNSRD. The helical transmembrane segment at 48–68 threads the bilayer; the sequence is FECFYSNFVQTVILLGTFFYC. The Lumenal portion of the chain corresponds to 69-88; the sequence is VERLQPWSIVTADISYKQIF. Residues 89–109 form a helical membrane-spanning segment; the sequence is VNVFVVCLIMVGLIFTKYWQH. At 110–118 the chain is on the cytoplasmic side; it reads GYKSLPKFD. The chain crosses the membrane as a helical span at residues 119 to 139; sequence TIYSLYLPFMVSLLFDTSSTV. The Lumenal segment spans residues 140-151; the sequence is INTILILSVLNS. Residues 152 to 172 form a helical membrane-spanning segment; sequence YRWRTQLVVIILQLCLIFFNF. At 173–181 the chain is on the cytoplasmic side; that stretch reads EAGDRLKNI. A helical transmembrane segment spans residues 182–203; the sequence is ISIVINSLLSLILKYIGQLKSL. Topologically, residues 204–223 are lumenal; that stretch reads DNIDSNLFSILLTNILYVSE. A helical membrane pass occupies residues 224-244; that stretch reads AGTVHFRILKGIILALTTIIS. At 245 to 253 the chain is on the cytoplasmic side; that stretch reads INYVLKKVM. Residues 254–274 traverse the membrane as a helical segment; that stretch reads HFKPFMLSISFAIGLPLFANT. The Lumenal segment spans residues 275–294; that stretch reads FIHLEDGENPLLWLVKYILE. Residues 295-315 form a helical membrane-spanning segment; sequence STIRQKILFAWSSILILSIPS. The Cytoplasmic segment spans residues 316–326; the sequence is ILIEKDSLSLN. The helical transmembrane segment at 327–347 threads the bilayer; it reads TSRKLWHFIIFLLIIPSFQMD. Topologically, residues 348–349 are lumenal; it reads SN. Residues 350–370 traverse the membrane as a helical segment; that stretch reads FVKIALSGTIPVFLSIEYIRF. Over 371–394 the chain is Cytoplasmic; it reads QNLPPLGSAIELQLRRFADDRDHS. Residues 395 to 415 form a helical membrane-spanning segment; sequence GPLIISYLYLLFGISTPLLMN. Residues 416–417 are Lumenal-facing; that stretch reads NS. The chain crosses the membrane as a helical span at residues 418 to 438; that stretch reads PMGLIGLGIGDSLASIIGKRY. Residues 439-449 are Cytoplasmic-facing; it reads GRIRWKGTQKT. A helical membrane pass occupies residues 450–470; that stretch reads LEGTLAFIVTSFIVCLVLLRF. Residues 471–472 lie on the Lumenal side of the membrane; that stretch reads DK. A helical transmembrane segment spans residues 473–493; sequence AAIFNHLTTLQLLTLCTLSGV. Over 494-519 the chain is Cytoplasmic; sequence LEGNSVLNDNILIPAFMMICEKLITL.

It belongs to the polyprenol kinase family.

The protein localises to the endoplasmic reticulum membrane. The catalysed reaction is a di-trans,poly-cis-dolichol + CTP = a di-trans,poly-cis-dolichyl phosphate + CDP + H(+). The protein operates within protein modification; protein glycosylation. In terms of biological role, catalyzes CTP-mediated phosphorylation of dolichol, the terminal step in de novo dolichyl monophosphate (Dol-P) biosynthesis. Dol-P is a lipid carrier essential for the synthesis of N-linked and O-linked oligosaccharides and for GPI anchors. The sequence is that of Dolichol kinase (SEC59) from Saccharomyces cerevisiae (strain ATCC 204508 / S288c) (Baker's yeast).